A 473-amino-acid polypeptide reads, in one-letter code: Probable acid phosphatase DDB_G0284755 (473 aa).

The active-site Nucleophile is His94. Asp359 functions as the Proton donor in the catalytic mechanism.

This sequence belongs to the histidine acid phosphatase family.

It carries out the reaction a phosphate monoester + H2O = an alcohol + phosphate. The sequence is that of Probable acid phosphatase DDB_G0284755 from Dictyostelium discoideum (Social amoeba).